The primary structure comprises 259 residues: Complement factor D (259 aa).

An N-terminal signal peptide occupies residues 1-21; that stretch reads MADRSGHLAALILLGAAVCVA. Positions 22 to 26 are cleaved as a propeptide — activation peptide; sequence QPRGR. Positions 27–254 constitute a Peptidase S1 domain; sequence ILGGQEAKSH…YVAWIDGVMA (228 aa). Residues C52 and C68 are joined by a disulfide bond. Catalysis depends on charge relay system residues H67 and D115. 3 cysteine pairs are disulfide-bonded: C149-C215, C180-C196, and C205-C230. The active-site Charge relay system is the S209. Residues 224-228 are self-inhibitor loop; it reads TSGSR.

The protein belongs to the peptidase S1 family. CFD is activated by the removal of 5 residues at the N-terminus, named activation peptide, by the MASP-3 isoform of MASP1.

The protein localises to the secreted. It catalyses the reaction Selective cleavage of Arg-|-Lys bond in complement factor B when in complex with complement subcomponent C3b or with cobra venom factor.. Its activity is regulated as follows. Circulates in plasma in a mature but self-inhibited form. Activated by factor B (CFB), which displaces the self-inhibition loop. Associates with CFB complexed with complement C3b. In terms of biological role, serine protease that initiates the alternative pathway of the complement system, a cascade of proteins that leads to phagocytosis and breakdown of pathogens and signaling that strengthens the adaptive immune system. In contrast to other complement pathways (classical, lectin and GZMK) that are directly activated by pathogens or antigen-antibody complexes, the alternative complement pathway is initiated by the spontaneous hydrolysis of complement C3. The alternative complement pathway acts as an amplification loop that enhances complement activation by mediating the formation of C3 and C5 convertases. Activated CFD cleaves factor B (CFB) when the latter is complexed with complement C3b, activating the C3 convertase of the alternative pathway. In Sus scrofa (Pig), this protein is Complement factor D (CFD).